We begin with the raw amino-acid sequence, 553 residues long: Putative transport protein CKO_00031 (553 aa).

5 helical membrane-spanning segments follow: residues isoleucine 4–isoleucine 24, glycine 28–aspartate 48, phenylalanine 65–serine 85, leucine 95–phenylalanine 115, and methionine 158–methionine 178. RCK C-terminal domains are found at residues glutamine 192–glutamine 276 and aspartate 279–asparagine 361. 6 helical membrane passes run methionine 371–valine 391, glycine 393–leucine 413, leucine 437–threonine 457, leucine 464–leucine 484, tyrosine 493–alanine 513, and leucine 533–glycine 553.

It belongs to the AAE transporter (TC 2.A.81) family. YidE subfamily.

The protein resides in the cell membrane. The chain is Putative transport protein CKO_00031 from Citrobacter koseri (strain ATCC BAA-895 / CDC 4225-83 / SGSC4696).